Here is a 291-residue protein sequence, read N- to C-terminus: Elongation factor Ts (291 aa).

The segment at 79 to 82 (TDFV) is involved in Mg(2+) ion dislocation from EF-Tu.

The protein belongs to the EF-Ts family.

The protein localises to the cytoplasm. Associates with the EF-Tu.GDP complex and induces the exchange of GDP to GTP. It remains bound to the aminoacyl-tRNA.EF-Tu.GTP complex up to the GTP hydrolysis stage on the ribosome. This chain is Elongation factor Ts, found in Anaplasma marginale (strain Florida).